The sequence spans 1125 residues: Telomerase reverse transcriptase (1125 aa).

The tract at residues 1–239 (MPRAPRCPAV…TKRLLSLTST (239 aa)) is RNA-interacting domain 1. Positions 58 to 205 (VPWGSQPPPA…RPVGGNFTNL (148 aa)) are GQ motif. The tract at residues 137–141 (WMLLL) is required for regulating specificity for telomeric DNA and for processivity for primer elongation. Residues 206–216 (GSAHQIKNSGH) are compositionally biased toward polar residues. The interval 206–304 (GSAHQIKNSG…ASDPSLSGSV (99 aa)) is disordered. The tract at residues 240 to 328 (NVPSAKKARF…PPQDAEKLRP (89 aa)) is linker. Positions 247–259 (ARFEPALRVDKGP) are enriched in basic and acidic residues. Over residues 273–287 (APSPAASPKVPPAAK) the composition is skewed to low complexity. The required for oligomerization stretch occupies residues 306–528 (CKHKPSSSSL…VPAAEHRLRE (223 aa)). Residues 329–540 (FTETRHFLYS…LAMFLFWLMD (212 aa)) are RNA-interacting domain 2. The short motif at 332–337 (TRHFLY) is the TFLY; involved in RNA binding element. The segment at 381-511 (FCRTRRLPRR…VKVEDCHWLR (131 aa)) is QFP motif. The CP motif stretch occupies residues 402–422 (LMNHAKCQYVRFLRSHCRFRT). A Phosphoserine; by DYRK2 modification is found at serine 447. Positions 595-928 (EVKHHQDTWL…CLFPWCGLLL (334 aa)) constitute a Reverse transcriptase domain. A Phosphotyrosine; by SRC-type Tyr-kinases modification is found at tyrosine 697. Residues aspartate 702, aspartate 861, and aspartate 862 each coordinate Mg(2+). A required for oligomerization region spans residues 907-921 (LGGAAPHQLPAHCLF). Positions 923-927 (WCGLL) are primer grip sequence. A CTE region spans residues 929–1125 (DTRTLEVFCD…LSTDFQTILD (197 aa)).

The protein belongs to the reverse transcriptase family. Telomerase subfamily. Catalytic component of the telomerase holoenzyme complex composed of one molecule of TERT, one molecule of WRAP53/TCAB1, two molecules of H/ACA ribonucleoprotein complex subunits DKC1, NOP10, NHP2 and GAR1, and a telomerase RNA template component (TERC). The telomerase holoenzyme complex is associated with TEP1, SMG6/EST1A and POT1. The molecular chaperone HSP90/P23 complex is required for correct assembly and stabilization of the active telomerase. Interacts directly with HSP90A and PTGES3. Interacts with HSPA1A; the interaction occurs in the absence of TERC and dissociates once the complex has formed. Interacts with RAN; the interaction promotes nuclear export of TERT. Interacts with XPO1. Interacts with PTPN11; the interaction retains TERT in the nucleus. Interacts with NCL (via RRM1 and C-terminal RRM4/Arg/Gly-rich domains); the interaction is important for nucleolar localization of TERT. Interacts with SMARCA4 (via the bromodomain); the interaction regulates Wnt-mediated signaling. Interacts with MCRS1 (isoform MCRS2); the interaction inhibits in vitro telomerase activity. Interacts with PIF1; the interaction has no effect on the elongation activity of TERT. Interacts with PML; the interaction recruits TERT to PML bodies and inhibits telomerase activity. Interacts with GNL3L. Interacts with isoform 1 and isoform 2 of NVL. Interacts with DHX36. Interacts with ATF7. Phosphorylation at Tyr-697 under oxidative stress leads to translocation of TERT to the cytoplasm and reduces its antiapoptotic activity. Dephosphorylated by SHP2/PTPN11 leading to nuclear retention. Phosphorylation at the G2/M phase at Ser-447 by DYRK2 promotes ubiquitination by the EDVP complex and degradation. In terms of processing, ubiquitinated by the EDVP complex, a E3 ligase complex following phosphorylation at Ser-447 by DYRK2. Ubiquitinated leads to proteasomal degradation. As to expression, isoform 1 and isoform 2 expressed in thymus, liver, spleen, lung, kidney and testis. High level of inactive isoform 3 in adult hippocampus, low level in heart, cortex and cerebellum.

The protein localises to the nucleus. Its subcellular location is the nucleolus. It is found in the nucleoplasm. The protein resides in the chromosome. It localises to the telomere. The protein localises to the cytoplasm. Its subcellular location is the PML body. It catalyses the reaction DNA(n) + a 2'-deoxyribonucleoside 5'-triphosphate = DNA(n+1) + diphosphate. Telomerase is a ribonucleoprotein enzyme essential for the replication of chromosome termini in most eukaryotes. Active in progenitor and cancer cells. Inactive, or very low activity, in normal somatic cells. Catalytic component of the teleromerase holoenzyme complex whose main activity is the elongation of telomeres by acting as a reverse transcriptase that adds simple sequence repeats to chromosome ends by copying a template sequence within the RNA component of the enzyme. Catalyzes the RNA-dependent extension of 3'-chromosomal termini with the 6-nucleotide telomeric repeat unit, 5'-TTAGGG-3'. The catalytic cycle involves primer binding, primer extension and release of product once the template boundary has been reached or nascent product translocation followed by further extension. More active on substrates containing 2 or 3 telomeric repeats. Telomerase activity is regulated by a number of factors including telomerase complex-associated proteins, chaperones and polypeptide modifiers. Modulates Wnt signaling. Plays important roles in aging and antiapoptosis. In Rattus norvegicus (Rat), this protein is Telomerase reverse transcriptase.